The following is a 1032-amino-acid chain: Beta-galactosidase (1032 aa).

2 residues coordinate substrate: Asn100 and Asp198. Na(+) is bound at residue Asp198. Mg(2+)-binding residues include Glu413, His415, and Glu458. Residues Glu458 and 534 to 537 (EYAH) each bind substrate. The active-site Proton donor is the Glu458. The active-site Nucleophile is the Glu534. Asn594 lines the Mg(2+) pocket. Residues Phe598 and Asn601 each contribute to the Na(+) site. Residues Asn601 and Trp1006 each coordinate substrate.

It belongs to the glycosyl hydrolase 2 family. Homotetramer. The cofactor is Mg(2+). Na(+) is required as a cofactor.

It carries out the reaction Hydrolysis of terminal non-reducing beta-D-galactose residues in beta-D-galactosides.. This is Beta-galactosidase from Vibrio vulnificus (strain CMCP6).